The following is an 802-amino-acid chain: Nuclear polyadenylated RNA-binding protein 3 (802 aa).

Disordered stretches follow at residues 1–174 (MSDE…RRET) and 252–293 (ALSV…RMRF). Over residues 22–34 (SNSNENELMNNSS) the composition is skewed to low complexity. Residues 37–73 (DGIEFDAPEEEREAEREEENEEQHELEDVNDEEEEDK) are compositionally biased toward acidic residues. Threonine 86 carries the phosphothreonine modification. Composition is skewed to acidic residues over residues 101–139 (DDDDDDNEEEEEEEEDDDDDDDDDDDDEEEEEEEEEEGN) and 149–158 (AAEDGEDEED). Residues 159 to 174 (KKDKTKDKEVELRRET) are compositionally biased toward basic and acidic residues. Positions 260–276 (STISTTASASATSGARS) are enriched in low complexity. The span at 277–293 (NDQRKPPLSDAQRRMRF) shows a compositional bias: basic and acidic residues. The RRM domain maps to 330–401 (SRLFIGNLPL…KKLILEVSSS (72 aa)). Position 451 is a phosphothreonine (threonine 451). Disordered regions lie at residues 571–675 (IYGA…PMDQ) and 717–802 (MQGQ…KLQK). A compositionally biased stretch (pro residues) spans 575–590 (PPLPVPNGPAVGPPPQ). Residues 593-614 (YYQGYSMPPPQQQQQQPYGNYG) are compositionally biased toward low complexity. Polar residues predominate over residues 632 to 642 (MNQSYGRYQTS). 2 stretches are compositionally biased toward low complexity: residues 651–661 (QIPQGYGRYQA) and 717–738 (MQGQAPQQQQQQLGGYSSMNSS). Positions 745–754 (TNYNGQNISA) are enriched in polar residues. Positions 757-769 (SAPPMSHQPPPPQ) are enriched in pro residues. The span at 770-785 (QQQQQQQQQQQQQQQP) shows a compositional bias: low complexity.

It localises to the nucleus. Its subcellular location is the nucleoplasm. Functionally, may be required for packaging pre-mRNAs into ribonucleoprotein structures amenable to efficient nuclear RNA processing. Binds to poly(A)+ RNA. Appears to act in the maintenance of CLN3 mRNA levels. The sequence is that of Nuclear polyadenylated RNA-binding protein 3 (NAB3) from Saccharomyces cerevisiae (strain ATCC 204508 / S288c) (Baker's yeast).